A 101-amino-acid polypeptide reads, in one-letter code: NADH-quinone oxidoreductase subunit K (101 aa).

3 helical membrane passes run 4–24 (LSHY…GIFI), 29–49 (IIVI…NLVA), and 65–85 (FVLT…VVFF).

This sequence belongs to the complex I subunit 4L family. As to quaternary structure, NDH-1 is composed of 14 different subunits. Subunits NuoA, H, J, K, L, M, N constitute the membrane sector of the complex.

The protein localises to the cell inner membrane. It carries out the reaction a quinone + NADH + 5 H(+)(in) = a quinol + NAD(+) + 4 H(+)(out). In terms of biological role, NDH-1 shuttles electrons from NADH, via FMN and iron-sulfur (Fe-S) centers, to quinones in the respiratory chain. The immediate electron acceptor for the enzyme in this species is believed to be ubiquinone. Couples the redox reaction to proton translocation (for every two electrons transferred, four hydrogen ions are translocated across the cytoplasmic membrane), and thus conserves the redox energy in a proton gradient. This is NADH-quinone oxidoreductase subunit K from Methylobacterium nodulans (strain LMG 21967 / CNCM I-2342 / ORS 2060).